A 133-amino-acid polypeptide reads, in one-letter code: Small ribosomal subunit protein uS8 (133 aa).

Belongs to the universal ribosomal protein uS8 family. As to quaternary structure, part of the 30S ribosomal subunit. Contacts proteins S5 and S12.

Functionally, one of the primary rRNA binding proteins, it binds directly to 16S rRNA central domain where it helps coordinate assembly of the platform of the 30S subunit. This is Small ribosomal subunit protein uS8 from Oenococcus oeni (strain ATCC BAA-331 / PSU-1).